A 403-amino-acid polypeptide reads, in one-letter code: DNA polymerase IV (403 aa).

The region spanning 23–203 (IAHMDCDAFY…KPVNILPGVG (181 aa)) is the UmuC domain. Residues Asp-27 and Asp-120 each coordinate Mg(2+). Residue Glu-121 is part of the active site.

It belongs to the DNA polymerase type-Y family. In terms of assembly, monomer. Mg(2+) serves as cofactor.

The protein localises to the cytoplasm. The enzyme catalyses DNA(n) + a 2'-deoxyribonucleoside 5'-triphosphate = DNA(n+1) + diphosphate. Its function is as follows. Poorly processive, error-prone DNA polymerase involved in untargeted mutagenesis. Copies undamaged DNA at stalled replication forks, which arise in vivo from mismatched or misaligned primer ends. These misaligned primers can be extended by PolIV. Exhibits no 3'-5' exonuclease (proofreading) activity. May be involved in translesional synthesis, in conjunction with the beta clamp from PolIII. This chain is DNA polymerase IV, found in Caulobacter vibrioides (strain ATCC 19089 / CIP 103742 / CB 15) (Caulobacter crescentus).